Reading from the N-terminus, the 174-residue chain is Squamosa promoter-binding-like protein 4 (174 aa).

Residues 1–42 form a disordered region; that stretch reads MEGKRSQGQGYMKKKSYLVEEDMETDTDEEEEVGRDRVRGSR. A compositionally biased stretch (acidic residues) spans 19–33; it reads VEEDMETDTDEEEEV. The SBP-type zinc finger occupies 51–128; it reads LRLCQVDRCT…AGHNERRRKS (78 aa). Residues Cys54, Cys59, Cys76, His79, Cys95, Cys98, His102, and Cys114 each contribute to the Zn(2+) site. A Bipartite nuclear localization signal motif is present at residues 111–127; the sequence is KRSCRRRLAGHNERRRK. Positions 118–127 are enriched in basic residues; it reads LAGHNERRRK. Disordered regions lie at residues 118-148 and 155-174; these read LAGH…GQVV and SRVE…PQIR. Over residues 163-174 the composition is skewed to polar residues; sequence MPNSSFKRPQIR.

It depends on Zn(2+) as a cofactor. Expressed in the rib meristem and inter-primordial tissue of the inflorescence apex.

The protein resides in the nucleus. It is found in the cytoplasm. Functionally, trans-acting factor that binds specifically to the consensus nucleotide sequence 5'-TNCGTACAA-3' of AP1 promoter. Promotes both vegetative phase change and flowering. In Arabidopsis thaliana (Mouse-ear cress), this protein is Squamosa promoter-binding-like protein 4 (SPL4).